The following is a 505-amino-acid chain: MKLAYWMYAGPAHIGTLRIATSFKNVHAIMHAPLGDDYFNVMRSMLERERDFTPVTASVVDRKVLGRGSQDKVVTNIVRKDQEEAPDLIVLTPTCTSSILQEDLQNFVARAQEQSKADVLLADVNHYRYNEFTAADRTLTQIVSYYIEKLAGNLPARSEKPTANILGISTLGFHNHHDCRELKQLLADLGVEVNVVAPEGCSVHDIQKMPSAWFNVVPYRELGRGAAEYLQRQTGQPLIDITPMGILQTARFIRAVQQILNTQGARVEYEEYIRSQTLFVSQAAWFSRSIDCQNLQGKRAVVYGDLTHAAAMTRILAREMGVRVVWAGTFCKYDAEWFKAEVADLCDEVLISDDHAEVGDRIAAAEPAAIFGTQMERHIGKRLNIPCGVISSPIHIQNFPVGYRPFLGYEGTNQIADLVYNSFTLGMEDHLLEVFGGHDTKEVITKTMTAQSDLEWDEAATRELAKIPGFVRSKVKRNTEKFARESGRDKITLEVMYAAKEAAGA.

A [4Fe-4S] cluster-binding site is contributed by Asp-36. The active-site Proton donor is the Asp-291. 426–427 (GM) is a binding site for substrate.

The protein belongs to the ChlB/BchB/BchZ family. As to quaternary structure, protochlorophyllide reductase is composed of three subunits; ChlL, ChlN and ChlB. Forms a heterotetramer of two ChlB and two ChlN subunits. Requires [4Fe-4S] cluster as cofactor.

It carries out the reaction chlorophyllide a + oxidized 2[4Fe-4S]-[ferredoxin] + 2 ADP + 2 phosphate = protochlorophyllide a + reduced 2[4Fe-4S]-[ferredoxin] + 2 ATP + 2 H2O. It functions in the pathway porphyrin-containing compound metabolism; chlorophyll biosynthesis (light-independent). Functionally, component of the dark-operative protochlorophyllide reductase (DPOR) that uses Mg-ATP and reduced ferredoxin to reduce ring D of protochlorophyllide (Pchlide) to form chlorophyllide a (Chlide). This reaction is light-independent. The NB-protein (ChlN-ChlB) is the catalytic component of the complex. The sequence is that of Light-independent protochlorophyllide reductase subunit B from Gloeobacter violaceus (strain ATCC 29082 / PCC 7421).